The sequence spans 204 residues: VQ motif-containing protein 13 (204 aa).

Positions methionine 1–lysine 12 are enriched in basic and acidic residues. The disordered stretch occupies residues methionine 1–threonine 26. A compositionally biased stretch (low complexity) spans proline 16–threonine 26. Residue serine 17 is modified to Phosphoserine. A VQ motif is present at residues phenylalanine 46–glycine 55. Residues isoleucine 56–arginine 90 are disordered. 2 positions are modified to phosphoserine: serine 73 and serine 128. At threonine 131 the chain carries Phosphothreonine. The segment at leucine 133–histidine 204 is disordered. Residues serine 143–lysine 152 show a composition bias toward low complexity. A phosphoserine mark is found at serine 147 and serine 173. A phosphothreonine mark is found at threonine 177 and threonine 192. A phosphoserine mark is found at serine 196 and serine 200.

Phosphorylated on serine and threonine residues by MPK6.

The protein localises to the nucleus. Its function is as follows. May modulate WRKY transcription factor activities. In Arabidopsis thaliana (Mouse-ear cress), this protein is VQ motif-containing protein 13.